The sequence spans 230 residues: TorCAD operon transcriptional regulatory protein TorR (230 aa).

Residues 4 to 117 (HIVIVEDEPV…ELVVRVKNLL (114 aa)) enclose the Response regulatory domain. Residue Asp-53 is modified to 4-aspartylphosphate. Positions 132–227 (DNCYRFAGYC…QHGEGYFLAA (96 aa)) form a DNA-binding region, ompR/PhoB-type.

Phosphorylated and dephosphorylated by TorS.

Its subcellular location is the cytoplasm. In terms of biological role, member of the two-component regulatory system TorS/TorR involved in the anaerobic utilization of trimethylamine-N-oxide (TMAO). Phosphorylated TorR activates the transcription of the torCAD operon by binding to four decameric boxes located in the torCAD promoter. Box1, 2 and 4 contain the DNA sequence 5'-CTGTTCATAT-3' and box3 contains the DNA sequence 5'-CCGTTCATCC-3'. Phosphorylated as well as unphosphorylated TorR negatively regulates its own expression by binding to box1 and 2. This is TorCAD operon transcriptional regulatory protein TorR (torR) from Escherichia coli O157:H7.